A 521-amino-acid chain; its full sequence is Feruloyl esterase B (521 aa).

The signal sequence occupies residues 1–17 (MKVASLLSLALPGAALA). 2 cysteine pairs are disulfide-bonded: Cys-26–Cys-72 and Cys-61–Cys-111. N-linked (GlcNAc...) asparagine glycans are attached at residues Asn-37, Asn-51, Asn-77, Asn-95, Asn-144, and Asn-177. 3 cysteine pairs are disulfide-bonded: Cys-184-Cys-438, Cys-253-Cys-270, and Cys-279-Cys-288. Ser-185 (acyl-ester intermediate) is an active-site residue. Residues Asp-254, Asp-257, Ala-259, Asp-261, and Ile-263 each coordinate Ca(2+). Asn-284, Asn-347, Asn-352, and Asn-378 each carry an N-linked (GlcNAc...) asparagine glycan. Residues Asp-397 and His-437 each act as charge relay system in the active site. 2 N-linked (GlcNAc...) asparagine glycosylation sites follow: Asn-488 and Asn-511. Cysteines 498 and 520 form a disulfide.

Belongs to the tannase family. As to quaternary structure, homodimer. Post-translationally, glycosylated.

It is found in the secreted. The catalysed reaction is feruloyl-polysaccharide + H2O = ferulate + polysaccharide.. With respect to regulation, inhibited by the specific serine esterase inhibitor AEBSF. Its function is as follows. Involved in degradation of plant cell walls. Hydrolyzes of the feruloyl-arabinose ester bond in arabinoxylans as well as the feruloyl-galactose and feruloyl-arabinose ester bonds in pectin. The sequence is that of Feruloyl esterase B (faeB) from Aspergillus niger.